Reading from the N-terminus, the 446-residue chain is Cyclin-T1-1 (446 aa).

It belongs to the cyclin family. Cyclin T subfamily.

The polypeptide is Cyclin-T1-1 (CYCT1-1) (Oryza sativa subsp. japonica (Rice)).